Consider the following 248-residue polypeptide: 3-deoxy-manno-octulosonate cytidylyltransferase (248 aa).

This sequence belongs to the KdsB family.

The protein resides in the cytoplasm. It catalyses the reaction 3-deoxy-alpha-D-manno-oct-2-ulosonate + CTP = CMP-3-deoxy-beta-D-manno-octulosonate + diphosphate. Its pathway is nucleotide-sugar biosynthesis; CMP-3-deoxy-D-manno-octulosonate biosynthesis; CMP-3-deoxy-D-manno-octulosonate from 3-deoxy-D-manno-octulosonate and CTP: step 1/1. It participates in bacterial outer membrane biogenesis; lipopolysaccharide biosynthesis. Functionally, activates KDO (a required 8-carbon sugar) for incorporation into bacterial lipopolysaccharide in Gram-negative bacteria. The chain is 3-deoxy-manno-octulosonate cytidylyltransferase from Klebsiella pneumoniae (strain 342).